The following is a 384-amino-acid chain: Anhydro-N-acetylmuramic acid kinase (384 aa).

Residue 9–16 participates in ATP binding; sequence GTSVDGID.

The protein belongs to the anhydro-N-acetylmuramic acid kinase family.

It carries out the reaction 1,6-anhydro-N-acetyl-beta-muramate + ATP + H2O = N-acetyl-D-muramate 6-phosphate + ADP + H(+). It functions in the pathway amino-sugar metabolism; 1,6-anhydro-N-acetylmuramate degradation. The protein operates within cell wall biogenesis; peptidoglycan recycling. Catalyzes the specific phosphorylation of 1,6-anhydro-N-acetylmuramic acid (anhMurNAc) with the simultaneous cleavage of the 1,6-anhydro ring, generating MurNAc-6-P. Is required for the utilization of anhMurNAc either imported from the medium or derived from its own cell wall murein, and thus plays a role in cell wall recycling. The sequence is that of Anhydro-N-acetylmuramic acid kinase from Rippkaea orientalis (strain PCC 8801 / RF-1) (Cyanothece sp. (strain PCC 8801)).